The sequence spans 239 residues: 7-cyano-7-deazaguanine synthase (239 aa).

ATP is bound at residue Phe13–Leu23. Cys201, Cys216, Cys219, and Cys222 together coordinate Zn(2+).

Belongs to the QueC family. It depends on Zn(2+) as a cofactor.

The catalysed reaction is 7-carboxy-7-deazaguanine + NH4(+) + ATP = 7-cyano-7-deazaguanine + ADP + phosphate + H2O + H(+). The protein operates within purine metabolism; 7-cyano-7-deazaguanine biosynthesis. Its function is as follows. Catalyzes the ATP-dependent conversion of 7-carboxy-7-deazaguanine (CDG) to 7-cyano-7-deazaguanine (preQ(0)). In Bradyrhizobium sp. (strain BTAi1 / ATCC BAA-1182), this protein is 7-cyano-7-deazaguanine synthase.